We begin with the raw amino-acid sequence, 580 residues long: MAFMEKPPARKVLLDDTVPLTAAVEASQSLQSHTEYIIRVQRGISAENSWQIVRRYSDFDLLNNSLQITGLSLPLPPKKLIGNMDREFIAERQKGLQNYLNVIMANHVLSNCELLKKFLDPNNYSANYTEIALQQVSMFFRSEPKWEVVEPLKDIGWRIRKKYFLMKIKNQPKERLVLSWADLGPDKYLSDKDFQCLIKLLPSCVHPYIYRVTFATASESSALLIRTFNDKGTLKDLIYKAKPKDPFLKKYCNPKKTQGLELQQIKTYGRQILEVLKFLHDKGFPYGHLHAANVMLDGNTCRLLDLENSLLGLPSFYRSYFTQFRKINTLESVDVHCFGHLLYEMTYGRPPDSVPVDSFPPASSMAVVAVLESTLSCEACKNGMPTVSRLLQMPLFSDVLLTTSEKPQFKIPTKLREALRIAKECIEKRLTEEQKQIHQHRRLTRAQSHHGSEEERKRRKILARKKSKRSAVENSEEQPVKHSNANNSAGSGASSPLTSPSSPTPPSTAGLSSALPPPPPPPPPPPPPAGPSPGTEMPAPPLPQAVNGVNRGALLSSIQNFQKGTLRKAKTCDHSAPKIG.

The region spanning 14-126 is the PX domain; sequence LDDTVPLTAA…KFLDPNNYSA (113 aa). The Protein kinase domain maps to 88-481; the sequence is FIAERQKGLQ…VENSEEQPVK (394 aa). The segment at 433 to 551 is disordered; it reads EQKQIHQHRR…LPQAVNGVNR (119 aa). Basic residues-rich tracts occupy residues 437 to 448 and 457 to 469; these read IHQHRRLTRAQS and KRRK…KSKR. The segment covering 483 to 514 has biased composition (low complexity); the sequence is SNANNSAGSGASSPLTSPSSPTPPSTAGLSSA. Residues 515–531 are compositionally biased toward pro residues; it reads LPPPPPPPPPPPPPAGP. One can recognise a WH2 domain in the interval 549-568; sequence VNRGALLSSIQNFQKGTLRK.

This sequence belongs to the protein kinase superfamily.

Its subcellular location is the cytoplasm. The protein localises to the cell membrane. In terms of biological role, binds to and modulates brain Na,K-ATPase subunits ATP1B1 and ATP1B3 and may thereby participate in the regulation of electrical excitability and synaptic transmission. May not display kinase activity. The chain is PX domain-containing protein kinase-like protein from Rattus norvegicus (Rat).